The primary structure comprises 122 residues: Small ribosomal subunit protein bS6 (122 aa).

Belongs to the bacterial ribosomal protein bS6 family.

Its function is as follows. Binds together with bS18 to 16S ribosomal RNA. This Neisseria meningitidis serogroup C (strain 053442) protein is Small ribosomal subunit protein bS6.